The following is a 346-amino-acid chain: Anthranilate phosphoribosyltransferase (346 aa).

5-phospho-alpha-D-ribose 1-diphosphate is bound by residues Gly-81, 84–85 (GD), 91–94 (NVST), 109–117 (KHGNRSVSS), and Ser-121. Anthranilate is bound at residue Gly-81. Ser-93 contacts Mg(2+). Anthranilate is bound at residue Asn-112. An anthranilate-binding site is contributed by Arg-167. Positions 226 and 227 each coordinate Mg(2+).

The protein belongs to the anthranilate phosphoribosyltransferase family. In terms of assembly, homodimer. The cofactor is Mg(2+).

It carries out the reaction N-(5-phospho-beta-D-ribosyl)anthranilate + diphosphate = 5-phospho-alpha-D-ribose 1-diphosphate + anthranilate. It functions in the pathway amino-acid biosynthesis; L-tryptophan biosynthesis; L-tryptophan from chorismate: step 2/5. Functionally, catalyzes the transfer of the phosphoribosyl group of 5-phosphorylribose-1-pyrophosphate (PRPP) to anthranilate to yield N-(5'-phosphoribosyl)-anthranilate (PRA). This chain is Anthranilate phosphoribosyltransferase, found in Hahella chejuensis (strain KCTC 2396).